Consider the following 254-residue polypeptide: 5-oxoprolinase subunit A (254 aa).

This sequence belongs to the LamB/PxpA family. Forms a complex composed of PxpA, PxpB and PxpC.

The catalysed reaction is 5-oxo-L-proline + ATP + 2 H2O = L-glutamate + ADP + phosphate + H(+). Its function is as follows. Catalyzes the cleavage of 5-oxoproline to form L-glutamate coupled to the hydrolysis of ATP to ADP and inorganic phosphate. The sequence is that of 5-oxoprolinase subunit A from Rhodopseudomonas palustris (strain BisB5).